A 662-amino-acid polypeptide reads, in one-letter code: DNA ligase (662 aa).

NAD(+)-binding positions include 32–36 (DAEYD), 81–82 (SL), and Glu112. Lys114 (N6-AMP-lysine intermediate) is an active-site residue. NAD(+) is bound by residues Arg135, Glu170, Lys286, and Lys310. Residues Cys402, Cys405, Cys420, and Cys425 each contribute to the Zn(2+) site. The region spanning 583 to 662 (PKGGPLTGST…AELHAMLRGE (80 aa)) is the BRCT domain.

Belongs to the NAD-dependent DNA ligase family. LigA subfamily. It depends on Mg(2+) as a cofactor. The cofactor is Mn(2+).

The enzyme catalyses NAD(+) + (deoxyribonucleotide)n-3'-hydroxyl + 5'-phospho-(deoxyribonucleotide)m = (deoxyribonucleotide)n+m + AMP + beta-nicotinamide D-nucleotide.. Its function is as follows. DNA ligase that catalyzes the formation of phosphodiester linkages between 5'-phosphoryl and 3'-hydroxyl groups in double-stranded DNA using NAD as a coenzyme and as the energy source for the reaction. It is essential for DNA replication and repair of damaged DNA. This is DNA ligase from Solibacter usitatus (strain Ellin6076).